The primary structure comprises 358 residues: 3-ketosteroid-9-alpha-monooxygenase, ferredoxin reductase component (358 aa).

The FAD-binding FR-type domain maps to 12 to 124; that stretch reads DHVLELQIAE…LAPSGNFVPT (113 aa). The 2Fe-2S ferredoxin-type domain occupies 269–358; the sequence is ATAVVELDGQ…SDSVEVTYDE (90 aa). [2Fe-2S] cluster is bound by residues C305, C310, C313, and C343.

In terms of assembly, monomer. The two-component system 3-ketosteroid-9-alpha-monooxygenase is composed of an oxygenase component KshA and a reductase component KshB. FAD serves as cofactor. [2Fe-2S] cluster is required as a cofactor.

It carries out the reaction androsta-1,4-diene-3,17-dione + 2 reduced [2Fe-2S]-[ferredoxin] + O2 + 2 H(+) = 9alpha-hydroxyandrosta-1,4-diene-3,17-dione + 2 oxidized [2Fe-2S]-[ferredoxin] + H2O. It functions in the pathway lipid metabolism; steroid biosynthesis. Functionally, involved in the degradation of cholesterol. Catalyzes the introduction of a 9a-hydroxyl moiety into 1,4-androstadiene-3,17-dione (ADD) to yield the 9alpha-hydroxy-1,4-androstadiene-3,17-dione (9OHADD) intermediate which spontaneously form 3-hydroxy-9,10-seconandrost-1,3,5(10)-triene-9,17-dione (HSA) via the meta-cleavage of ring B with concomitant aromatization of ring A. The chain is 3-ketosteroid-9-alpha-monooxygenase, ferredoxin reductase component (hmp) from Mycobacterium tuberculosis (strain CDC 1551 / Oshkosh).